We begin with the raw amino-acid sequence, 109 residues long: Thiosulfate sulfurtransferase GlpE (109 aa).

A Rhodanese domain is found at 16-104 (RSNGAVVVDI…WRATFPSETA (89 aa)). The Cysteine persulfide intermediate role is filled by C64.

It belongs to the GlpE family.

It is found in the cytoplasm. It carries out the reaction thiosulfate + hydrogen cyanide = thiocyanate + sulfite + 2 H(+). It catalyses the reaction thiosulfate + [thioredoxin]-dithiol = [thioredoxin]-disulfide + hydrogen sulfide + sulfite + 2 H(+). In terms of biological role, transferase that catalyzes the transfer of sulfur from thiosulfate to thiophilic acceptors such as cyanide or dithiols. May function in a CysM-independent thiosulfate assimilation pathway by catalyzing the conversion of thiosulfate to sulfite, which can then be used for L-cysteine biosynthesis. The sequence is that of Thiosulfate sulfurtransferase GlpE from Ectopseudomonas mendocina (strain ymp) (Pseudomonas mendocina).